A 339-amino-acid polypeptide reads, in one-letter code: Phosphate acyltransferase (339 aa).

The protein belongs to the PlsX family. As to quaternary structure, homodimer. Probably interacts with PlsY.

Its subcellular location is the cytoplasm. It carries out the reaction a fatty acyl-[ACP] + phosphate = an acyl phosphate + holo-[ACP]. The protein operates within lipid metabolism; phospholipid metabolism. Functionally, catalyzes the reversible formation of acyl-phosphate (acyl-PO(4)) from acyl-[acyl-carrier-protein] (acyl-ACP). This enzyme utilizes acyl-ACP as fatty acyl donor, but not acyl-CoA. This Pasteurella multocida (strain Pm70) protein is Phosphate acyltransferase.